The following is a 435-amino-acid chain: 5-methylthioadenosine/S-adenosylhomocysteine deaminase (435 aa).

The Zn(2+) site is built by H65 and H67. Substrate-binding residues include E94, R150, and H189. Residue H216 participates in Zn(2+) binding. E219 and D304 together coordinate substrate. Residue D304 coordinates Zn(2+).

Belongs to the metallo-dependent hydrolases superfamily. MTA/SAH deaminase family. Requires Zn(2+) as cofactor.

The enzyme catalyses S-adenosyl-L-homocysteine + H2O + H(+) = S-inosyl-L-homocysteine + NH4(+). The catalysed reaction is S-methyl-5'-thioadenosine + H2O + H(+) = S-methyl-5'-thioinosine + NH4(+). Its function is as follows. Catalyzes the deamination of 5-methylthioadenosine and S-adenosyl-L-homocysteine into 5-methylthioinosine and S-inosyl-L-homocysteine, respectively. Is also able to deaminate adenosine. This chain is 5-methylthioadenosine/S-adenosylhomocysteine deaminase, found in Bacillus cereus (strain ATCC 14579 / DSM 31 / CCUG 7414 / JCM 2152 / NBRC 15305 / NCIMB 9373 / NCTC 2599 / NRRL B-3711).